A 122-amino-acid chain; its full sequence is MIQMQTNLDVADNSGARRVMCIKVLGGSKRRYATIGDIIVVSIKEAIPRGKVKKGDVMKAVVVRVRKDIRRADGSVIRFDRNAAVLINNQSEPVGTRIFGPVPRELRAKNHMKIISLAPEVL.

The protein belongs to the universal ribosomal protein uL14 family. As to quaternary structure, part of the 50S ribosomal subunit. Forms a cluster with proteins L3 and L19. In the 70S ribosome, L14 and L19 interact and together make contacts with the 16S rRNA in bridges B5 and B8.

Binds to 23S rRNA. Forms part of two intersubunit bridges in the 70S ribosome. This chain is Large ribosomal subunit protein uL14, found in Bradyrhizobium diazoefficiens (strain JCM 10833 / BCRC 13528 / IAM 13628 / NBRC 14792 / USDA 110).